The sequence spans 154 residues: uncharacterized protein (154 aa).

A run of 4 helical transmembrane segments spans residues 15-37 (DFSF…ALIT), 58-80 (FAAM…WLWG), 95-116 (LGAL…FAFT), and 123-145 (LVIS…FVPH).

It localises to the cell membrane. This is an uncharacterized protein from Archaeoglobus fulgidus (strain ATCC 49558 / DSM 4304 / JCM 9628 / NBRC 100126 / VC-16).